We begin with the raw amino-acid sequence, 101 residues long: uncharacterized protein (101 aa).

Residues 65 to 79 (QEAAAPAGPQEPAEA) show a composition bias toward low complexity. The disordered stretch occupies residues 65 to 101 (QEAAAPAGPQEPAEASGDAGKKEEVEEEEIEIDFGMF). Over residues 89–101 (VEEEEIEIDFGMF) the composition is skewed to acidic residues.

This is an uncharacterized protein from Encephalitozoon cuniculi (strain GB-M1) (Microsporidian parasite).